We begin with the raw amino-acid sequence, 201 residues long: Ribosome maturation factor RimP (201 aa).

Positions 180-201 (LRRGSAPAQDEEGEDEAPGAPL) are disordered. A compositionally biased stretch (acidic residues) spans 188–201 (QDEEGEDEAPGAPL).

The protein belongs to the RimP family.

Its subcellular location is the cytoplasm. Its function is as follows. Required for maturation of 30S ribosomal subunits. The chain is Ribosome maturation factor RimP from Methylobacterium sp. (strain 4-46).